Here is a 323-residue protein sequence, read N- to C-terminus: Cytochrome c biogenesis protein CcsA (323 aa).

The next 8 helical transmembrane spans lie at Ile9–Leu29, Leu37–Val57, Leu71–Phe91, Val100–Leu120, Met145–Ile165, Ile227–Asn247, Thr261–His275, and Ala288–Leu308.

This sequence belongs to the CcmF/CycK/Ccl1/NrfE/CcsA family. As to quaternary structure, may interact with Ccs1.

The protein resides in the plastid. It is found in the chloroplast thylakoid membrane. Functionally, required during biogenesis of c-type cytochromes (cytochrome c6 and cytochrome f) at the step of heme attachment. In Cucumis sativus (Cucumber), this protein is Cytochrome c biogenesis protein CcsA.